The chain runs to 404 residues: Chorismate synthase (404 aa).

NADP(+) is bound by residues R40 and R46. FMN contacts are provided by residues 135–137, 256–257, G300, 315–319, and R341; these read RAS, QA, and KPIST.

The protein belongs to the chorismate synthase family. As to quaternary structure, homotetramer. FMNH2 serves as cofactor.

It catalyses the reaction 5-O-(1-carboxyvinyl)-3-phosphoshikimate = chorismate + phosphate. The protein operates within metabolic intermediate biosynthesis; chorismate biosynthesis; chorismate from D-erythrose 4-phosphate and phosphoenolpyruvate: step 7/7. Catalyzes the anti-1,4-elimination of the C-3 phosphate and the C-6 proR hydrogen from 5-enolpyruvylshikimate-3-phosphate (EPSP) to yield chorismate, which is the branch point compound that serves as the starting substrate for the three terminal pathways of aromatic amino acid biosynthesis. This reaction introduces a second double bond into the aromatic ring system. The sequence is that of Chorismate synthase from Mycobacterium sp. (strain JLS).